The primary structure comprises 526 residues: Peptide chain release factor 3 (526 aa).

The region spanning 9–277 (NKRRTFAIIS…DFVEYAPGPQ (269 aa)) is the tr-type G domain. GTP is bound by residues 18–25 (SHPDAGKT), 86–90 (DTPGH), and 140–143 (NKLD).

This sequence belongs to the TRAFAC class translation factor GTPase superfamily. Classic translation factor GTPase family. PrfC subfamily.

Its subcellular location is the cytoplasm. In terms of biological role, increases the formation of ribosomal termination complexes and stimulates activities of RF-1 and RF-2. It binds guanine nucleotides and has strong preference for UGA stop codons. It may interact directly with the ribosome. The stimulation of RF-1 and RF-2 is significantly reduced by GTP and GDP, but not by GMP. The sequence is that of Peptide chain release factor 3 from Legionella pneumophila (strain Corby).